The sequence spans 576 residues: MHPRYSPAPPPQQQQQMGGPPHQQQGGGGGGGGNMRGPSNAQQLPPQIPRSQNYSNGSSSSAAAAPLTSRSAFPGAPLTASAVALKGALPQRPPAMTSPAAAAAGAALAAGAPYRGAASWTPQGYAPAAAAAAAAVAQQAAYRYTAPLPQPAYAAYTPHTATTPATTTYGQRVPTAASPSNTNSSSSSNTGSQSGTLSTSLSNTTNTNTNMGPNGTVQNQNQQGGEQLSKTNLYIRGLQQGTTDKDLVNMCAQYGTIISTKAILDKTTNKCYGFVDFEQPAFAECAVKGLQGKGVQAQMAKQQEQDPTNLYIANLPPHFKETDLEAMLSKYGQVVSTRILRDQQMNSKGVGFARMESREKCEQIIQMFNGNTIPGAKDPLLVKFADGGPKKKNLFKTPDPNARAWRDVSAEGIPVAYDPTMQQNGVSVNVGTPIGVPYSRFSAPQVGGYPVAGSQWIPGYMMTTQVDDQTSYSPQYMQMAAAPQLGVTSYKPEAVNQVQPRGISMMVSGDTGVPYGTMMPQLATLQIGNSVSHRSPYYAPPPTIIPTMPMTDSEQASTAASPDEAYTQYPHQAAPK.

Over residues 1–12 the composition is skewed to pro residues; it reads MHPRYSPAPPPQ. The segment at 1–66 is disordered; it reads MHPRYSPAPP…GSSSSAAAAP (66 aa). Tyr-5 bears the Phosphotyrosine mark. Positions 13-24 are enriched in low complexity; the sequence is QQQQMGGPPHQQ. Residues 25–35 are compositionally biased toward gly residues; the sequence is QGGGGGGGGNM. Residues 37–54 show a composition bias toward polar residues; it reads GPSNAQQLPPQIPRSQNY. Residues 55–66 show a composition bias toward low complexity; it reads SNGSSSSAAAAP. Residues Tyr-125 and Tyr-142 each carry the phosphotyrosine modification. The disordered stretch occupies residues 164-225; sequence PATTTYGQRV…TVQNQNQQGG (62 aa). Over residues 178-225 the composition is skewed to low complexity; sequence SPSNTNSSSSSNTGSQSGTLSTSLSNTTNTNTNMGPNGTVQNQNQQGG. 2 consecutive RRM domains span residues 231–302 and 308–387; these read TNLY…MAKQ and TNLY…FADG. Residues 538-576 are disordered; sequence YAPPPTIIPTMPMTDSEQASTAASPDEAYTQYPHQAAPK.

Has a role in the perception of gravity. The protein is Protein alan shepard of Drosophila simulans (Fruit fly).